Reading from the N-terminus, the 370-residue chain is Dual-specificity RNA methyltransferase RlmN (370 aa).

Glu-93 (proton acceptor) is an active-site residue. Residues 99-337 (EEGRGTLCVS…VTTVRKTRGD (239 aa)) enclose the Radical SAM core domain. Cys-106 and Cys-343 are oxidised to a cystine. Residues Cys-113, Cys-117, and Cys-120 each contribute to the [4Fe-4S] cluster site. Residues 167–168 (GE), Ser-199, 221–223 (SLH), and Asn-300 contribute to the S-adenosyl-L-methionine site. Cys-343 functions as the S-methylcysteine intermediate in the catalytic mechanism.

Belongs to the radical SAM superfamily. RlmN family. [4Fe-4S] cluster serves as cofactor.

It is found in the cytoplasm. It catalyses the reaction adenosine(2503) in 23S rRNA + 2 reduced [2Fe-2S]-[ferredoxin] + 2 S-adenosyl-L-methionine = 2-methyladenosine(2503) in 23S rRNA + 5'-deoxyadenosine + L-methionine + 2 oxidized [2Fe-2S]-[ferredoxin] + S-adenosyl-L-homocysteine. The enzyme catalyses adenosine(37) in tRNA + 2 reduced [2Fe-2S]-[ferredoxin] + 2 S-adenosyl-L-methionine = 2-methyladenosine(37) in tRNA + 5'-deoxyadenosine + L-methionine + 2 oxidized [2Fe-2S]-[ferredoxin] + S-adenosyl-L-homocysteine. Specifically methylates position 2 of adenine 2503 in 23S rRNA and position 2 of adenine 37 in tRNAs. m2A2503 modification seems to play a crucial role in the proofreading step occurring at the peptidyl transferase center and thus would serve to optimize ribosomal fidelity. The chain is Dual-specificity RNA methyltransferase RlmN from Francisella philomiragia subsp. philomiragia (strain ATCC 25017 / CCUG 19701 / FSC 153 / O#319-036).